The primary structure comprises 396 residues: S-adenosylmethionine synthase (396 aa).

His16 is a binding site for ATP. Mg(2+) is bound at residue Asp18. Glu44 contacts K(+). Residues Glu57 and Gln100 each contribute to the L-methionine site. The interval 100–110 (QSVDIAQGVDR) is flexible loop. ATP is bound by residues 165 to 167 (DAK), Asp240, 246 to 247 (RK), Ala263, and Lys267. Asp240 serves as a coordination point for L-methionine. Lys271 contributes to the L-methionine binding site.

It belongs to the AdoMet synthase family. In terms of assembly, homotetramer; dimer of dimers. It depends on Mg(2+) as a cofactor. The cofactor is K(+).

The protein resides in the cytoplasm. It carries out the reaction L-methionine + ATP + H2O = S-adenosyl-L-methionine + phosphate + diphosphate. Its pathway is amino-acid biosynthesis; S-adenosyl-L-methionine biosynthesis; S-adenosyl-L-methionine from L-methionine: step 1/1. Functionally, catalyzes the formation of S-adenosylmethionine (AdoMet) from methionine and ATP. The overall synthetic reaction is composed of two sequential steps, AdoMet formation and the subsequent tripolyphosphate hydrolysis which occurs prior to release of AdoMet from the enzyme. This chain is S-adenosylmethionine synthase, found in Pseudomonas putida (strain W619).